The chain runs to 393 residues: 6-hydroxy-3-succinoylpyridine 3-monooxygenase HspB (393 aa).

Residues arginine 6 to alanine 35 and methionine 277 to aspartate 287 each bind FAD.

It belongs to the PheA/TfdB FAD monooxygenase family. In terms of assembly, homodimer. FAD serves as cofactor.

It catalyses the reaction 4-(6-hydroxypyridin-3-yl)-4-oxobutanoate + 2 NADH + O2 + 2 H(+) = 2,5-dihydroxypyridine + succinate semialdehyde + 2 NAD(+) + H2O. The protein operates within alkaloid degradation; nicotine degradation. Its activity is regulated as follows. Inhibited by Cu(2+) and Zn(2+). Involved in the nicotine degradation. Catalyzes the cleavage of 6-hydroxy-3-succinoylpyridine (HSP) by incorporation of oxygen at the 3-position to produce to 2,5-dihydroxypyridine (DHP) and succinic semialdehyde. In Pseudomonas putida (strain DSM 28022 / S16), this protein is 6-hydroxy-3-succinoylpyridine 3-monooxygenase HspB.